The following is a 175-amino-acid chain: Nucleoside triphosphate/diphosphate phosphatase (175 aa).

R23 acts as the Proton donor in catalysis. Mg(2+) is bound by residues N87, D103, D105, D107, D120, and E123.

Belongs to the Ntdp family. Mg(2+) serves as cofactor.

It carries out the reaction a ribonucleoside 5'-triphosphate + H2O = a ribonucleoside 5'-diphosphate + phosphate + H(+). It catalyses the reaction a ribonucleoside 5'-diphosphate + H2O = a ribonucleoside 5'-phosphate + phosphate + H(+). Functionally, has nucleoside phosphatase activity towards nucleoside triphosphates and nucleoside diphosphates. The polypeptide is Nucleoside triphosphate/diphosphate phosphatase (Listeria monocytogenes serotype 4b (strain CLIP80459)).